A 706-amino-acid chain; its full sequence is SPX domain-containing membrane protein OsI_32082 (706 aa).

In terms of domain architecture, SPX spans 2–145 (VNFSNKLTKD…GYKFTDYYVR (144 aa)). A run of 6 helical transmembrane segments spans residues 251–271 (MSLVLNLANTFLYMVNTYIVV), 281–301 (LGAAATACGAVIGSMAVAQVF), 318–338 (LLFSSVVLLLGNVMYAMAFDL), 340–359 (SLTILLLGRVLCGMGSARAV), 378–398 (AAFVSASALGMACGPALAGLL), and 414–434 (LPGWIMAFGWLVYLIWLWISF). A disordered region spans residues 475–498 (SEQDEEDDNGDEEHNETLSSSTTT). Acidic residues predominate over residues 476 to 488 (EQDEEDDNGDEEH). The next 5 helical transmembrane spans lie at 520 to 540 (LLIYFMLKYAMEILLAESSVV), 554 to 574 (VFLAVLGLSVLPVNAIVGTYI), 583 to 603 (ILVASEMALLAGVMLSFKLTV), 611 to 631 (VCSAVLTFVSAEVVEGVNLSL), and 678 to 698 (LLNATLLPALLVCVASIAATL).

It belongs to the major facilitator superfamily.

The protein localises to the membrane. This is SPX domain-containing membrane protein OsI_32082 from Oryza sativa subsp. indica (Rice).